Here is a 621-residue protein sequence, read N- to C-terminus: tRNA 5-methylaminomethyl-2-thiouridine biosynthesis bifunctional protein MnmC (621 aa).

Residues 1-222 are tRNA (mnm(5)s(2)U34)-methyltransferase; it reads MKNANLSFKG…KRQMSSAVLE (222 aa). The segment at 250–621 is FAD-dependent cmnm(5)s(2)U34 oxidoreductase; it reads IGTGVAGLAT…LIRKLKKGLK (372 aa).

In the N-terminal section; belongs to the methyltransferase superfamily. tRNA (mnm(5)s(2)U34)-methyltransferase family. This sequence in the C-terminal section; belongs to the DAO family. It depends on FAD as a cofactor.

It is found in the cytoplasm. It catalyses the reaction 5-aminomethyl-2-thiouridine(34) in tRNA + S-adenosyl-L-methionine = 5-methylaminomethyl-2-thiouridine(34) in tRNA + S-adenosyl-L-homocysteine + H(+). Its function is as follows. Catalyzes the last two steps in the biosynthesis of 5-methylaminomethyl-2-thiouridine (mnm(5)s(2)U) at the wobble position (U34) in tRNA. Catalyzes the FAD-dependent demodification of cmnm(5)s(2)U34 to nm(5)s(2)U34, followed by the transfer of a methyl group from S-adenosyl-L-methionine to nm(5)s(2)U34, to form mnm(5)s(2)U34. The protein is tRNA 5-methylaminomethyl-2-thiouridine biosynthesis bifunctional protein MnmC of Campylobacter concisus (strain 13826).